Consider the following 173-residue polypeptide: Photosystem I assembly protein Ycf3 (173 aa).

TPR repeat units lie at residues 36-69, 73-106, and 121-154; these read AFAY…EQGE, SYIL…NPRL, and GELS…APNN.

The protein belongs to the Ycf3 family.

It is found in the cellular thylakoid membrane. In terms of biological role, essential for the assembly of the photosystem I (PSI) complex. May act as a chaperone-like factor to guide the assembly of the PSI subunits. The chain is Photosystem I assembly protein Ycf3 from Synechococcus sp. (strain JA-2-3B'a(2-13)) (Cyanobacteria bacterium Yellowstone B-Prime).